Consider the following 396-residue polypeptide: Small ribosomal subunit protein uS9m (396 aa).

A disordered region spans residues 374–396; it reads PRVRERKKPGQEGARRKFTWKKR.

This sequence belongs to the universal ribosomal protein uS9 family. In terms of assembly, component of the mitochondrial ribosome small subunit (28S) which comprises a 12S rRNA and about 30 distinct proteins.

It localises to the mitochondrion. The polypeptide is Small ribosomal subunit protein uS9m (MRPS9) (Bos taurus (Bovine)).